The sequence spans 420 residues: 20-oxo-5-O-mycaminosyltylactone 23-monooxygenase (420 aa).

Residues 1–28 are disordered; that stretch reads MSSSGDARPSQKGILLPAARANDTDEAA. Heme is bound by residues His-118, Arg-122, Arg-311, His-367, and Cys-369.

The protein belongs to the cytochrome P450 family.

The enzyme catalyses 20-oxo-5-O-beta-D-mycaminosyltylonolide + 2 reduced [2Fe-2S]-[ferredoxin] + O2 + 2 H(+) = 5-O-beta-D-mycaminosyltylonolide + 2 oxidized [2Fe-2S]-[ferredoxin] + H2O. Its pathway is antibiotic biosynthesis; tylosin biosynthesis. Its function is as follows. Involved in the biosynthesis of the complex macrolide antibiotic tylosin. Catalyzes the hydroxylation of 20-oxo-5-O-beta-mycaminosyltylactone at the C-23 position to yield 5-O-beta-mycaminosyltylonolide. The protein is 20-oxo-5-O-mycaminosyltylactone 23-monooxygenase of Streptomyces fradiae (Streptomyces roseoflavus).